Here is a 163-residue protein sequence, read N- to C-terminus: Cyclic pyranopterin monophosphate synthase (163 aa).

Residues 75 to 77 (LCH) and 113 to 114 (ME) contribute to the substrate site. D128 is a catalytic residue.

This sequence belongs to the MoaC family. As to quaternary structure, homohexamer; trimer of dimers.

The catalysed reaction is (8S)-3',8-cyclo-7,8-dihydroguanosine 5'-triphosphate = cyclic pyranopterin phosphate + diphosphate. The protein operates within cofactor biosynthesis; molybdopterin biosynthesis. In terms of biological role, catalyzes the conversion of (8S)-3',8-cyclo-7,8-dihydroguanosine 5'-triphosphate to cyclic pyranopterin monophosphate (cPMP). The sequence is that of Cyclic pyranopterin monophosphate synthase from Jannaschia sp. (strain CCS1).